The sequence spans 118 residues: Large ribosomal subunit protein uL18 (118 aa).

It belongs to the universal ribosomal protein uL18 family. As to quaternary structure, part of the 50S ribosomal subunit; part of the 5S rRNA/L5/L18/L25 subcomplex. Contacts the 5S and 23S rRNAs.

Its function is as follows. This is one of the proteins that bind and probably mediate the attachment of the 5S RNA into the large ribosomal subunit, where it forms part of the central protuberance. The protein is Large ribosomal subunit protein uL18 of Parvibaculum lavamentivorans (strain DS-1 / DSM 13023 / NCIMB 13966).